A 200-amino-acid polypeptide reads, in one-letter code: LexA repressor (200 aa).

Residues 28 to 48 (RAEIARILGFKSANAAEEHIK) constitute a DNA-binding region (H-T-H motif). Catalysis depends on for autocatalytic cleavage activity residues Ser118 and Lys155.

It belongs to the peptidase S24 family. Homodimer.

It carries out the reaction Hydrolysis of Ala-|-Gly bond in repressor LexA.. Represses a number of genes involved in the response to DNA damage (SOS response), including recA and lexA. In the presence of single-stranded DNA, RecA interacts with LexA causing an autocatalytic cleavage which disrupts the DNA-binding part of LexA, leading to derepression of the SOS regulon and eventually DNA repair. The chain is LexA repressor from Cellvibrio japonicus (strain Ueda107) (Pseudomonas fluorescens subsp. cellulosa).